Reading from the N-terminus, the 300-residue chain is N-acetylmuramic acid 6-phosphate etherase 1 (300 aa).

An SIS domain is found at 57 to 220 (IATAFAQGGR…TTGAMIKSGK (164 aa)). Glutamate 85 (proton donor) is an active-site residue. Residue glutamate 116 is part of the active site.

This sequence belongs to the GCKR-like family. MurNAc-6-P etherase subfamily. Homodimer.

It carries out the reaction N-acetyl-D-muramate 6-phosphate + H2O = N-acetyl-D-glucosamine 6-phosphate + (R)-lactate. It functions in the pathway amino-sugar metabolism; 1,6-anhydro-N-acetylmuramate degradation. The protein operates within amino-sugar metabolism; N-acetylmuramate degradation. It participates in cell wall biogenesis; peptidoglycan recycling. Functionally, specifically catalyzes the cleavage of the D-lactyl ether substituent of MurNAc 6-phosphate, producing GlcNAc 6-phosphate and D-lactate. Together with AnmK, is also required for the utilization of anhydro-N-acetylmuramic acid (anhMurNAc) either imported from the medium or derived from its own cell wall murein, and thus plays a role in cell wall recycling. This Vibrio cholerae serotype O1 (strain ATCC 39315 / El Tor Inaba N16961) protein is N-acetylmuramic acid 6-phosphate etherase 1.